We begin with the raw amino-acid sequence, 142 residues long: Calmodulin-alpha (142 aa).

Residue alanine 2 is modified to N-acetylalanine. 4 consecutive EF-hand domains span residues 8–43 (EQIA…LGQN), 44–79 (PTEA…KMKD), 81–116 (DSEE…LGEK), and 117–142 (LTDE…YEEF). 15 residues coordinate Ca(2+): aspartate 21, aspartate 23, aspartate 25, threonine 27, glutamate 32, aspartate 57, aspartate 59, asparagine 61, threonine 63, glutamate 68, aspartate 94, aspartate 96, asparagine 98, tyrosine 100, and glutamate 105. Lysine 116 carries the N6,N6,N6-trimethyllysine modification. Residues aspartate 130, aspartate 132, aspartate 134, glutamine 136, and glutamate 141 each coordinate Ca(2+).

The protein belongs to the calmodulin family.

Functionally, calmodulin mediates the control of a large number of enzymes, ion channels and other proteins by Ca(2+). Among the enzymes to be stimulated by the calmodulin-Ca(2+) complex are a number of protein kinases and phosphatases. In Arbacia punctulata (Punctuate sea urchin), this protein is Calmodulin-alpha.